Consider the following 240-residue polypeptide: uncharacterized protein (240 aa).

3 consecutive transmembrane segments (helical) span residues Ile12–Ser32, Ile66–Val86, and Ile89–Phe109. N-linked (GlcNAc...) asparagine; by host glycans are attached at residues Asn129 and Asn157.

The protein resides in the membrane. This is an uncharacterized protein from Acanthamoeba polyphaga mimivirus (APMV).